The sequence spans 181 residues: MRLVLLGPPGAGKGTQAAILSEKLGIPHISTGDLFRANIGEGTPLGIEAKQYIDAGKLVPTDVTARMVASRLAESDAAEGFLLDGFPRTVEQADILANLLSEAGQTLDGVVNYQVSEDVVVERMLSRGRADDNEETIRTRLGVYRDETAPLIDHYGDKIINIEAEGEVEEINARTLKALGK.

10-15 (GAGKGT) provides a ligand contact to ATP. The interval 30 to 59 (STGDLFRANIGEGTPLGIEAKQYIDAGKLV) is NMP. AMP is bound by residues Thr-31, Arg-36, 57-59 (KLV), 85-88 (GFPR), and Gln-92. The tract at residues 126-132 (SRGRADD) is LID. Arg-127 is an ATP binding site. Arg-129 and Arg-140 together coordinate AMP. Gly-166 provides a ligand contact to ATP.

The protein belongs to the adenylate kinase family. Monomer.

Its subcellular location is the cytoplasm. It catalyses the reaction AMP + ATP = 2 ADP. The protein operates within purine metabolism; AMP biosynthesis via salvage pathway; AMP from ADP: step 1/1. Catalyzes the reversible transfer of the terminal phosphate group between ATP and AMP. Plays an important role in cellular energy homeostasis and in adenine nucleotide metabolism. This Corynebacterium glutamicum (strain R) protein is Adenylate kinase.